A 446-amino-acid chain; its full sequence is Glutamine synthetase (446 aa).

One can recognise a GS beta-grasp domain in the interval 18–103 (ENVRYLRLQF…LICDVYKTDG (86 aa)). Positions 110-446 (PRANLKRVLK…WERDQYMKQY (337 aa)) constitute a GS catalytic domain. Residues E134 and E136 each contribute to the Mg(2+) site. E186 contributes to the ATP binding site. 2 residues coordinate Mg(2+): E191 and E198. L-glutamate contacts are provided by residues 242–243 (NG) and G243. H247 provides a ligand contact to Mg(2+). Position 251 (S251) interacts with ATP. L-glutamate-binding residues include R300, E306, and R318. ATP contacts are provided by R318 and R323. E335 lines the Mg(2+) pocket. R337 is a binding site for L-glutamate.

The protein belongs to the glutamine synthetase family. As to quaternary structure, oligomer of 12 subunits arranged in the form of two hexagons. In its feedback-inhibited form, interacts with TnrA in order to block its DNA-binding activity. Requires Mg(2+) as cofactor.

Its subcellular location is the cytoplasm. It catalyses the reaction L-glutamate + NH4(+) + ATP = L-glutamine + ADP + phosphate + H(+). Its activity is regulated as follows. Inhibited by glutamine. Functionally, glutamine synthetase (GS) is an unusual multitasking protein that functions as an enzyme, a transcription coregulator, and a chaperone in ammonium assimilation and in the regulation of genes involved in nitrogen metabolism. It catalyzes the ATP-dependent biosynthesis of glutamine from glutamate and ammonia. Feedback-inhibited GlnA also interacts with and regulates the activity of the transcriptional regulator TnrA. During nitrogen limitation, TnrA is in its DNA-binding active state and turns on the transcription of genes required for nitrogen assimilation. Under conditions of nitrogen excess, feedback-inhibited GlnA forms a stable complex with TnrA, which inhibits its DNA-binding activity. In contrast, feedback-inhibited GlnA acts as a chaperone to stabilize the DNA-binding activity of GlnR, which represses the transcription of nitrogen assimilation genes. In Staphylococcus aureus (strain MSSA476), this protein is Glutamine synthetase.